A 309-amino-acid chain; its full sequence is tRNA pseudouridine synthase B (309 aa).

Asp-40 (nucleophile) is an active-site residue.

This sequence belongs to the pseudouridine synthase TruB family. Type 1 subfamily.

The catalysed reaction is uridine(55) in tRNA = pseudouridine(55) in tRNA. In terms of biological role, responsible for synthesis of pseudouridine from uracil-55 in the psi GC loop of transfer RNAs. In Mycobacterium avium (strain 104), this protein is tRNA pseudouridine synthase B.